An 88-amino-acid chain; its full sequence is MRLSEAIKHLAVGAVDAESPVELLPAEVVSVSPVEIKLKENSKLIIPEDAIIIPKRMQSGGDDALEPGDRLMTAALTGGQSFFILDKV.

To B.subtilis YqbR.

This is Phage-like element PBSX protein XkdR (xkdR) from Bacillus subtilis (strain 168).